Here is an 830-residue protein sequence, read N- to C-terminus: Probable glucan 1,3-beta-glucosidase D (830 aa).

Basic and acidic residues-rich tracts occupy residues 1–11 (MPGHSRSRDRL) and 74–84 (VHEHDHDHEYD). Disordered stretches follow at residues 1-91 (MPGH…EEPW), 127-163 (MSGA…QRRK), and 260-297 (GGPG…STSA). Residues 1 to 307 (MPGHSRSRDR…RPSFWKRYHK (307 aa)) are Cytoplasmic-facing. A compositionally biased stretch (basic residues) spans 147–163 (GKGKKRLDRETRRQRRK). The helical; Signal-anchor for type II membrane protein transmembrane segment at 308 to 328 (TFIFFAILIVLAAIAIPVGII) threads the bilayer. The Extracellular portion of the chain corresponds to 329-830 (EARRLHGTSG…PSFGNLPEYY (502 aa)). N-linked (GlcNAc...) asparagine glycosylation is found at Asn341, Asn376, Asn381, Asn393, Asn397, Asn546, and Asn558. Glu597 functions as the Proton donor in the catalytic mechanism. 3 N-linked (GlcNAc...) asparagine glycosylation sites follow: Asn610, Asn669, and Asn689. Catalysis depends on Glu702, which acts as the Nucleophile.

The protein belongs to the glycosyl hydrolase 5 (cellulase A) family.

It localises to the cell membrane. The enzyme catalyses Successive hydrolysis of beta-D-glucose units from the non-reducing ends of (1-&gt;3)-beta-D-glucans, releasing alpha-glucose.. In terms of biological role, glucosidase involved in the degradation of cellulosic biomass. Active on lichenan. In Aspergillus niger (strain ATCC MYA-4892 / CBS 513.88 / FGSC A1513), this protein is Probable glucan 1,3-beta-glucosidase D (exgD).